The sequence spans 320 residues: UV DNA damage endonuclease (320 aa).

The protein belongs to the uve1/UvsE family.

Functionally, component in a DNA repair pathway. Removal of UV LIGHT damaged nucleotides. Recognizes pyrimidine dimers and cleave a phosphodiester bond immediately 5' to the lesion. This chain is UV DNA damage endonuclease, found in Bacillus pumilus (strain SAFR-032).